Consider the following 396-residue polypeptide: Probable peptidoglycan glycosyltransferase FtsW (396 aa).

Residues 1–27 (MPFLDKVKQQYEDWTRITPSNLLYDRA) lie on the Cytoplasmic side of the membrane. Residues 28 to 48 (LLLLFFVLLLIGLLAVSSASI) traverse the membrane as a helical segment. Residues 49 to 64 (PVGTRLFKDPFYFAKR) lie on the Periplasmic side of the membrane. Residues 65–85 (DAIYVFLSCVTCYLCVQVPME) traverse the membrane as a helical segment. Residues 86–93 (KWEQWHVR) lie on the Cytoplasmic side of the membrane. Residues 94 to 114 (LFAFAIFLLILVLIPGIGLSV) traverse the membrane as a helical segment. Over 115–122 (NGARRWIP) the chain is Periplasmic. A helical membrane pass occupies residues 123-143 (MVLFNFQPAEFAKLALTCFLA). The Cytoplasmic portion of the chain corresponds to 144–157 (SYFTRKYDEVRSRK). A helical transmembrane segment spans residues 158 to 178 (LSAFKPFALMGLMGLFLLSQP). At 179 to 183 (DLGST) the chain is on the periplasmic side. A run of 2 helical transmembrane segments spans residues 184–204 (VVLF…FWQF) and 205–225 (VGLM…SAYR). Over 226–285 (LKRFTGFLDPFKDPYGTGFQLSNSLMAFGRGEWVGEGLGNSIQKLEYLPEAHTDFVMAVV) the chain is Periplasmic. The helical transmembrane segment at 286-306 (GEEFGFLGILVIVILLGLLIF) threads the bilayer. Residues 307–323 (RAMKIGRESLLLEQRFK) lie on the Cytoplasmic side of the membrane. A helical transmembrane segment spans residues 324–344 (GFFAFGISFWIFFQGFVNLGM). The Periplasmic segment spans residues 345–355 (SLGLLPTKGLT). A helical membrane pass occupies residues 356–376 (FPLISYGGSSLIIMSMTIGLL). Over 377–396 (LRIDHENRLMRIGQARLRDD) the chain is Cytoplasmic.

Belongs to the SEDS family. FtsW subfamily.

The protein resides in the cell inner membrane. The enzyme catalyses [GlcNAc-(1-&gt;4)-Mur2Ac(oyl-L-Ala-gamma-D-Glu-L-Lys-D-Ala-D-Ala)](n)-di-trans,octa-cis-undecaprenyl diphosphate + beta-D-GlcNAc-(1-&gt;4)-Mur2Ac(oyl-L-Ala-gamma-D-Glu-L-Lys-D-Ala-D-Ala)-di-trans,octa-cis-undecaprenyl diphosphate = [GlcNAc-(1-&gt;4)-Mur2Ac(oyl-L-Ala-gamma-D-Glu-L-Lys-D-Ala-D-Ala)](n+1)-di-trans,octa-cis-undecaprenyl diphosphate + di-trans,octa-cis-undecaprenyl diphosphate + H(+). It functions in the pathway cell wall biogenesis; peptidoglycan biosynthesis. Peptidoglycan polymerase that is essential for cell division. This chain is Probable peptidoglycan glycosyltransferase FtsW, found in Pasteurella multocida (strain Pm70).